The primary structure comprises 492 residues: Probable cobyric acid synthase (492 aa).

Residues 248–434 (PVRIAVVRLP…MHGLFQNPGA (187 aa)) enclose the GATase cobBQ-type domain. The Nucleophile role is filled by Cys-327. The active site involves His-426.

Belongs to the CobB/CobQ family. CobQ subfamily.

Its pathway is cofactor biosynthesis; adenosylcobalamin biosynthesis. Catalyzes amidations at positions B, D, E, and G on adenosylcobyrinic A,C-diamide. NH(2) groups are provided by glutamine, and one molecule of ATP is hydrogenolyzed for each amidation. This is Probable cobyric acid synthase from Methanoculleus marisnigri (strain ATCC 35101 / DSM 1498 / JR1).